The primary structure comprises 222 residues: S-crystallin SL20-1 (222 aa).

The region spanning P2 to G80 is the GST N-terminal domain. Residues N82–W222 enclose the GST C-terminal domain.

Belongs to the GST superfamily. As to expression, lens.

S-crystallins are structural components of squids and octopi eye lens. Contains relatively little if any GST activity. This is S-crystallin SL20-1 from Nototodarus sloanii (Wellington flying squid).